The chain runs to 519 residues: Cobyric acid synthase (519 aa).

Residues 256-438 (WLRVAVPRLP…WHGLFENDAF (183 aa)) form the GATase cobBQ-type domain. The active-site Nucleophile is cysteine 337. The active site involves histidine 430.

This sequence belongs to the CobB/CobQ family. CobQ subfamily.

The protein operates within cofactor biosynthesis; adenosylcobalamin biosynthesis. In terms of biological role, catalyzes amidations at positions B, D, E, and G on adenosylcobyrinic A,C-diamide. NH(2) groups are provided by glutamine, and one molecule of ATP is hydrogenolyzed for each amidation. The protein is Cobyric acid synthase of Saccharopolyspora erythraea (strain ATCC 11635 / DSM 40517 / JCM 4748 / NBRC 13426 / NCIMB 8594 / NRRL 2338).